An 89-amino-acid polypeptide reads, in one-letter code: Small ribosomal subunit protein uS15 (89 aa).

It belongs to the universal ribosomal protein uS15 family. Part of the 30S ribosomal subunit. Forms a bridge to the 50S subunit in the 70S ribosome, contacting the 23S rRNA.

In terms of biological role, one of the primary rRNA binding proteins, it binds directly to 16S rRNA where it helps nucleate assembly of the platform of the 30S subunit by binding and bridging several RNA helices of the 16S rRNA. Functionally, forms an intersubunit bridge (bridge B4) with the 23S rRNA of the 50S subunit in the ribosome. This is Small ribosomal subunit protein uS15 from Nostoc sp. (strain PCC 7120 / SAG 25.82 / UTEX 2576).